The chain runs to 382 residues: ATP phosphoribosyltransferase regulatory subunit (382 aa).

This sequence belongs to the class-II aminoacyl-tRNA synthetase family. HisZ subfamily. In terms of assembly, heteromultimer composed of HisG and HisZ subunits.

It localises to the cytoplasm. It functions in the pathway amino-acid biosynthesis; L-histidine biosynthesis; L-histidine from 5-phospho-alpha-D-ribose 1-diphosphate: step 1/9. Functionally, required for the first step of histidine biosynthesis. May allow the feedback regulation of ATP phosphoribosyltransferase activity by histidine. This is ATP phosphoribosyltransferase regulatory subunit from Burkholderia ambifaria (strain ATCC BAA-244 / DSM 16087 / CCUG 44356 / LMG 19182 / AMMD) (Burkholderia cepacia (strain AMMD)).